The sequence spans 484 residues: Pheophytinase, chloroplastic (484 aa).

Residues 1–47 (MEIISLNVVPQCSVVTWSSKLATKRLVPNRSSLLFSGVKKSRLVIRS) constitute a chloroplast transit peptide.

Belongs to the AB hydrolase superfamily. In terms of assembly, interacts with HCAR, RCCR, PAO and the LHCII complex. Part of a SGR1-CCE-LHCII complex, which acts in chlorophyll breakdown.

The protein resides in the plastid. It localises to the chloroplast thylakoid membrane. Its subcellular location is the chloroplast stroma. Alpha/beta hydrolase dephytylating specifically the Mg-free chlorophyll pigment (pheophytin), yielding pheophorbide. No activity on chlorophyll. Belongs to the chlorophyll catabolic enzymes (CCEs). The sequence is that of Pheophytinase, chloroplastic (PPH) from Arabidopsis thaliana (Mouse-ear cress).